The chain runs to 395 residues: Aurora kinase A (395 aa).

Residues 1–114 are disordered; the sequence is MDRCKENCVS…QASLQKTEDT (114 aa). Composition is skewed to polar residues over residues 29-60 and 84-99; these read QIPSQNLGSASSGQAQRVLCPSNSQRVPSQAQ and RLNNPQKNEQPAASGN. Phosphoserine occurs at positions 40 and 50. The segment covering 100–114 has biased composition (basic and acidic residues); sequence DSEKEQASLQKTEDT. The region spanning 124 to 374 is the Protein kinase domain; it reads FDIGRPLGKG…LAEVLEHPWI (251 aa). ATP contacts are provided by residues Lys134, Lys153, and 201–204; that span reads LEYA. The Proton acceptor role is filled by Asp247. A Glycyl lysine isopeptide (Lys-Gly) (interchain with G-Cter in SUMO2) cross-link involves residue Lys249. ATP is bound by residues 251–252 and Asp265; that span reads EN. The activation segment stretch occupies residues 271-284; it reads HAPSSRRTTMCGTL. Thr278 and Thr279 each carry phosphothreonine. A Phosphoserine; by PKA and PAK modification is found at Ser333. Over residues 376 to 385 the composition is skewed to polar residues; it reads ANSSKPPTGH. The disordered stretch occupies residues 376 to 395; sequence ANSSKPPTGHTSKEPTSKSS. The segment covering 386–395 has biased composition (basic and acidic residues); that stretch reads TSKEPTSKSS.

The protein belongs to the protein kinase superfamily. Ser/Thr protein kinase family. Aurora subfamily. As to quaternary structure, part of a complex composed of NEDD9, AURKA and CTTN; within the complex NEDD9 acts as a scaffold protein and is required for complex formation. Identified in a complex with AUNIP and NIN. Interacts with CPEB1, JTB, TACC1, TPX2, PPP2CA, as well as with the protein phosphatase type 1 (PP1) isoforms PPP1CA, PPP1CB and PPP1CC. Also interacts with its substrates ARHGEF2, BORA, KIF2A, PARD3, and p53/TP53. Interaction with BORA promotes phosphorylation of PLK1. Interacts with GADD45A, competing with its oligomerization. Interacts with FBXL7 and CIMAP3. Interacts (via C-terminus) with AUNIP (via C-terminus). Interacts with SIRT2. Interacts with FRY; this interaction facilitates AURKA-mediated PLK1 phosphorylation. Interacts with MYCN; interaction is phospho-independent and triggers AURKA activation; AURKA competes with FBXW7 for binding to unphosphorylated MYCN but not for binding to phosphorylated MYCN. Interacts with HNRNPU. Interacts with AAAS. Interacts with KLHL18 and CUL3. Interacts with FOXP1. Interacts with HDAC6; AURKA-mediated phosphorylation of HDAC6 promotes deacetylation of alpha-tubulin. In terms of processing, activated by phosphorylation at Thr-279; this brings about a change in the conformation of the activation segment. Phosphorylation at Thr-279 varies during the cell cycle and is highest during M phase. Autophosphorylated at Thr-279 upon TPX2 binding. Thr-279 can be phosphorylated by several kinases, including PAK and PKA. Protein phosphatase type 1 (PP1) binds AURKA and inhibits its activity by dephosphorylating Thr-279 during mitosis. Phosphorylation at Ser-333 decreases the kinase activity. PPP2CA controls degradation by dephosphorylating Ser-52 at the end of mitosis. Post-translationally, ubiquitinated by the anaphase-promoting complex (APC), leading to its degradation by the proteasome. Ubiquitinated by CHFR, leading to its degradation by the proteasome. Ubiquitinated by the E3 ubiquitin-protein ligase complex SCF(FBXL7) during mitosis, leading to its degradation by the proteasome. Detected in embryonic neurons in dorsal root ganglia and brain cortex (at protein level). Highly expressed in testis, in about one third of the seminiferous tubules. Expression is restricted to specific spermatocytes nearing completion of prophase, with levels falling off on transition to elongated spermatids. Highly expressed in the ovary, expression in the oocyte starts around the transition to large growing follicle. Abundant expression is seen in the proliferating granulosa and thecal cells of the growing follicle, and in the young corpus luteum. Very weakly expressed in spleen and intestine.

It localises to the cytoplasm. Its subcellular location is the cytoskeleton. The protein resides in the microtubule organizing center. The protein localises to the centrosome. It is found in the spindle pole. It localises to the centriole. Its subcellular location is the cell projection. The protein resides in the neuron projection. The protein localises to the cilium. It is found in the cilium basal body. It localises to the basolateral cell membrane. The catalysed reaction is L-seryl-[protein] + ATP = O-phospho-L-seryl-[protein] + ADP + H(+). The enzyme catalyses L-threonyl-[protein] + ATP = O-phospho-L-threonyl-[protein] + ADP + H(+). Its activity is regulated as follows. Activation of CDK1, appears to be an upstream event of AURKA activation. Phosphatase inhibitor-2 (PPP1R2) and TPX2 act also as activators. Inactivated by the G2 checkpoint. Inhibited by GADD45A and p53/TP53, and through dephosphorylation by protein phosphatase type 1 (PP1). MLN8054 is also a potent and selective inhibitor. Activated during the early phase of cilia disassembly in the presence of CIMAP3. Inhibited by the small molecule inhibitor VX-680. In terms of biological role, mitotic serine/threonine kinase that contributes to the regulation of cell cycle progression. Associates with the centrosome and the spindle microtubules during mitosis and plays a critical role in various mitotic events including the establishment of mitotic spindle, centrosome duplication, centrosome separation as well as maturation, chromosomal alignment, spindle assembly checkpoint, and cytokinesis. Required for normal spindle positioning during mitosis and for the localization of NUMA1 and DCTN1 to the cell cortex during metaphase. Required for initial activation of CDK1 at centrosomes. Phosphorylates numerous target proteins, including ARHGEF2, BORA, BRCA1, CDC25B, DLGP5, HDAC6, KIF2A, LATS2, NDEL1, PARD3, PPP1R2, PLK1, RASSF1, TACC3, p53/TP53 and TPX2. Phosphorylates MCRS1 which is required for MCRS1-mediated kinetochore fiber assembly and mitotic progression. Regulates KIF2A tubulin depolymerase activity. Required for normal axon formation. Plays a role in microtubule remodeling during neurite extension. Important for microtubule formation and/or stabilization. Also acts as a key regulatory component of the p53/TP53 pathway, and particularly the checkpoint-response pathways critical for oncogenic transformation of cells, by phosphorylating and destabilizing p53/TP53. Phosphorylates its own inhibitors, the protein phosphatase type 1 (PP1) isoforms, to inhibit their activity. Inhibits cilia outgrowth. Required for cilia disassembly via phosphorylation of HDAC6 and subsequent deacetylation of alpha-tubulin. Regulates protein levels of the anti-apoptosis protein BIRC5 by suppressing the expression of the SCF(FBXL7) E3 ubiquitin-protein ligase substrate adapter FBXL7 through the phosphorylation of the transcription factor FOXP1. The polypeptide is Aurora kinase A (Aurka) (Mus musculus (Mouse)).